Consider the following 698-residue polypeptide: Probable Xaa-Pro aminopeptidase P (698 aa).

Asp509, Asp520, Glu604, and Glu618 together coordinate Mn(2+).

It belongs to the peptidase M24B family. Mn(2+) serves as cofactor.

The catalysed reaction is Release of any N-terminal amino acid, including proline, that is linked to proline, even from a dipeptide or tripeptide.. Catalyzes the removal of a penultimate prolyl residue from the N-termini of peptides. In Trichophyton verrucosum (strain HKI 0517), this protein is Probable Xaa-Pro aminopeptidase P (AMPP).